Consider the following 259-residue polypeptide: Ubiquitin-conjugating enzyme E2 J2 (259 aa).

The Cytoplasmic segment spans residues Met1–His226. Residues Thr12–Glu162 enclose the UBC core domain. Cys94 functions as the Glycyl thioester intermediate in the catalytic mechanism. The chain crosses the membrane as a helical; Anchor for type IV membrane protein span at residues Gly227 to Tyr247. Over Thr248 to Glu259 the chain is Lumenal.

This sequence belongs to the ubiquitin-conjugating enzyme family. In terms of assembly, interacts with murid herpesvirus 4 protein K3 (mK3).

The protein resides in the endoplasmic reticulum membrane. It carries out the reaction S-ubiquitinyl-[E1 ubiquitin-activating enzyme]-L-cysteine + [E2 ubiquitin-conjugating enzyme]-L-cysteine = [E1 ubiquitin-activating enzyme]-L-cysteine + S-ubiquitinyl-[E2 ubiquitin-conjugating enzyme]-L-cysteine.. It participates in protein modification; protein ubiquitination. Its function is as follows. Catalyzes the covalent attachment of ubiquitin to other proteins. Seems to function in the selective degradation of misfolded membrane proteins from the endoplasmic reticulum (ERAD). In cooperation with the GATOR2 complex, catalyzes 'Lys-6'-linked ubiquitination of NPRL2. Functionally, in case of infection by the murid herpesvirus 4, its association with the viral E3 ligase K3 mediates ubiquitination of host surface class I (MHC-I) H-2D(b)/H2-D1 and H-2K(b)/H2-K1 molecules before they exit the endoplasmic reticulum, leading to their degradation by the ERAD system, thus blocking the immune detection of virus-infected cells. The complex formed with the murid herpesvirus 4 protein K3 mediates ubiquitination of lysine, as well as serine and threonine residues present in the cytoplasmic tail of surface class I molecules and promotes ubiquitination of hydroxylated serine or threonine residues via ester bonds instead of the classical isopeptide linkage. This is Ubiquitin-conjugating enzyme E2 J2 (Ube2j2) from Mus musculus (Mouse).